Consider the following 108-residue polypeptide: Small ribosomal subunit protein bS6 (108 aa).

This sequence belongs to the bacterial ribosomal protein bS6 family.

Binds together with bS18 to 16S ribosomal RNA. The protein is Small ribosomal subunit protein bS6 of Trichormus variabilis (strain ATCC 29413 / PCC 7937) (Anabaena variabilis).